Here is a 235-residue protein sequence, read N- to C-terminus: MNKLLECRDIRKVYREGSLDTEVLKGVSFDIDKGELVSIVGSSGSGKSTLLHILGALDDATQGEVDFLGQNLSALSSNKQAALRNKHLGFVYQFHHLLADFTALENVAMPLLIGGIKVTEAKQAAKALLEKVGLSHRMDHRPSELSGGERQRVAIARALVNKPDLVLADEPTGNLDHNTALAIYDLMRELNKESNIAFLVVTHDNELAAKMDRQMHMQDGLLVDRLMTESASVEG.

Positions Leu5–Gly235 constitute an ABC transporter domain. An ATP-binding site is contributed by Gly41–Ser48.

This sequence belongs to the ABC transporter superfamily. Lipoprotein translocase (TC 3.A.1.125) family. As to quaternary structure, the complex is composed of two ATP-binding proteins (LolD) and two transmembrane proteins (LolC and LolE).

The protein localises to the cell inner membrane. Functionally, part of the ABC transporter complex LolCDE involved in the translocation of mature outer membrane-directed lipoproteins, from the inner membrane to the periplasmic chaperone, LolA. Responsible for the formation of the LolA-lipoprotein complex in an ATP-dependent manner. This is Lipoprotein-releasing system ATP-binding protein LolD from Vibrio parahaemolyticus serotype O3:K6 (strain RIMD 2210633).